The primary structure comprises 642 residues: Threonine--tRNA ligase (642 aa).

One can recognise a TGS domain in the interval 1 to 61 (MPVITLPDGS…ETDAELSIIT (61 aa)). The interval 243–534 (DHRKIGKQLD…LIEEYAGRFP (292 aa)) is catalytic. Cys334, His385, and His511 together coordinate Zn(2+).

The protein belongs to the class-II aminoacyl-tRNA synthetase family. As to quaternary structure, homodimer. It depends on Zn(2+) as a cofactor.

It is found in the cytoplasm. It catalyses the reaction tRNA(Thr) + L-threonine + ATP = L-threonyl-tRNA(Thr) + AMP + diphosphate + H(+). Its function is as follows. Catalyzes the attachment of threonine to tRNA(Thr) in a two-step reaction: L-threonine is first activated by ATP to form Thr-AMP and then transferred to the acceptor end of tRNA(Thr). Also edits incorrectly charged L-seryl-tRNA(Thr). The sequence is that of Threonine--tRNA ligase from Shewanella baltica (strain OS195).